The chain runs to 44 residues: Conotoxin Rg11a (44 aa).

Intrachain disulfides connect Cys1–Cys15, Cys8–Cys22, Cys14–Cys30, and Cys21–Cys36.

Expressed by the venom duct.

The protein localises to the secreted. Functionally, neurotoxin. Elicits hypersensibility when injected intracranially in mice. May act via potassium channel currents. The chain is Conotoxin Rg11a from Conus regius (Crown cone).